Here is a 290-residue protein sequence, read N- to C-terminus: MGDYMIRATGFNGHVRAFAARTTESVEDMRRRHDMWNTATAAAGRTLTITLMMGAMLKGNESLHVKVKGGGPIGQIMAEANAHGEGIAYVSNPHVHFELNDKGKLDVARAVGTDGFVYVTKDLGLKEPYQGSAPIVSGEIGEDFTYYFVMSEQTPSAVGVGVLVNPEDRSVLAAGGFILQLLPNTPEEVVAAIEERLGQLPQVSRMIGEGLTPEEILDRVLDEPKILSHTEIQFSCKCSADKVVQALISMGREEMEGLIEEQGEAEVHCHFCNERYHYDRSALEDILKDM.

Cystine bridges form between C236-C238 and C269-C272.

Belongs to the HSP33 family. In terms of processing, under oxidizing conditions two disulfide bonds are formed involving the reactive cysteines. Under reducing conditions zinc is bound to the reactive cysteines and the protein is inactive.

The protein localises to the cytoplasm. Functionally, redox regulated molecular chaperone. Protects both thermally unfolding and oxidatively damaged proteins from irreversible aggregation. Plays an important role in the bacterial defense system toward oxidative stress. The protein is 33 kDa chaperonin of Brevibacillus brevis (strain 47 / JCM 6285 / NBRC 100599).